We begin with the raw amino-acid sequence, 702 residues long: Kinesin-like protein KIF3A (702 aa).

The Kinesin motor domain occupies 14-345; that stretch reads NVKVVVRCRP…LRYANRAKNI (332 aa). 100-107 provides a ligand contact to ATP; that stretch reads GQTGTGKT. Residues 355–593 adopt a coiled-coil conformation; it reads PKDALLRQFQ…LSRELRLQML (239 aa). 2 disordered regions span residues 372–424 and 667–702; these read KKLE…KMIE and LMKL…SLLQ. Residues 376 to 400 show a composition bias toward acidic residues; that stretch reads EGEEISGSDISGSEEDDDEEGEVGE. A compositionally biased stretch (basic and acidic residues) spans 410 to 424; that stretch reads DQAGKKKVSPDKMIE. A globular region spans residues 600–702; the sequence is PRDYQEMIEN…PETVIDSLLQ (103 aa). Residues 675 to 690 show a composition bias toward basic residues; the sequence is TSKGKARPKTGRRKRS. Serine 690 carries the post-translational modification Phosphoserine.

The protein belongs to the TRAFAC class myosin-kinesin ATPase superfamily. Kinesin family. Kinesin II subfamily. Heterodimer of KIF3A and KIF3B. Interacts with CIMAP3. Interacts with CLN3. Interacts with DCTN1. Interacts with FLCN. Interacts with AP3B1.

It localises to the cytoplasm. Its subcellular location is the cytoskeleton. It is found in the cell projection. The protein resides in the cilium. The protein localises to the microtubule organizing center. It localises to the centrosome. Its subcellular location is the centriole. In terms of biological role, microtubule-based anterograde translocator for membranous organelles. Plus end-directed microtubule sliding activity in vitro. Plays a role in primary cilia formation. Plays a role in centriole cohesion and subdistal appendage organization and function. Regulates the formation of the subdistal appendage via recruitment of DCTN1 to the centriole. Also required for ciliary basal feet formation and microtubule anchoring to mother centriole. In Macaca fascicularis (Crab-eating macaque), this protein is Kinesin-like protein KIF3A (KIF3A).